Consider the following 72-residue polypeptide: Mitotic-spindle organizing protein 1 (72 aa).

This sequence belongs to the MOZART1 family. In terms of assembly, part of the gamma-tubulin complex.

It localises to the cytoplasm. The protein localises to the cytoskeleton. The protein resides in the microtubule organizing center. It is found in the spindle pole body. Its function is as follows. Required for gamma-tubulin complex recruitment to the microtubule organizing center (MTOC). The sequence is that of Mitotic-spindle organizing protein 1 from Cryptococcus neoformans var. neoformans serotype D (strain B-3501A) (Filobasidiella neoformans).